The following is a 1030-amino-acid chain: Protein phosphatase 1 regulatory subunit 12A (1030 aa).

Residues 35 to 38 (KVKF) carry the KVKF motif motif. ANK repeat units follow at residues 39 to 68 (DDGA…DINY), 72 to 101 (DGLT…NINQ), 105 to 134 (EGWI…HVGA), 138 to 164 (EGDT…RQGV), 198 to 227 (SGGT…DVNI), and 231 to 260 (DGWT…DMEM). A (3S)-3-hydroxyasparagine; by HIF1AN; partial mark is found at Asn67 and Asn100. Asn226 carries the (3S)-3-hydroxyasparagine; by HIF1AN; partial modification. Disordered regions lie at residues 290-628 (LHSE…SVPT) and 643-928 (ASTT…EKDD). The span at 291–300 (HSEKRDKKSP) shows a compositional bias: basic and acidic residues. Ser299 carries the post-translational modification Phosphoserine. Residues 302–316 (IESTANMDNNQSQKT) show a composition bias toward polar residues. A compositionally biased stretch (basic and acidic residues) spans 318 to 340 (KNKETLIIEPEKNASRIESLEQE). Residues 357 to 369 (SEEDEEDDSESEA) show a composition bias toward acidic residues. Over residues 385-402 (TSSTQAAPVAVTTPTVSS) the composition is skewed to low complexity. Phosphoserine is present on residues Ser422 and Ser432. Residues 422-432 (SPKEEERKDES) show a composition bias toward basic and acidic residues. A Phosphothreonine modification is found at Thr443. Ser445 carries the phosphoserine; by NUAK1 modification. Phosphotyrosine is present on Tyr446. Low complexity predominate over residues 469–480 (RSASSPRLSSSL). Ser472 is modified (phosphoserine; by NUAK1). Ser473 is modified (phosphoserine; by CDK1). At Ser477 the chain carries Phosphoserine. Basic and acidic residues predominate over residues 481–491 (DNKEKEKDSKG). Residues Ser507 and Ser509 each carry the phosphoserine modification. Residues 540–551 (NSSVNEGSTYHK) show a composition bias toward polar residues. Low complexity predominate over residues 564 to 610 (SSSVPSTTSTPTVTSAAGLQKSLLSSTSTTTKITTGSSSAGTQSSTS). Phosphoserine is present on residues Ser601 and Ser618. Over residues 614–625 (WAEDSTEKEKDS) the composition is skewed to basic and acidic residues. Low complexity predominate over residues 643–660 (ASTTTLTTTTAGTVSSTT). Over residues 673 to 682 (VRDEESESQR) the composition is skewed to basic and acidic residues. Residues 682 to 864 (RKARSRQARQ…VSFWTQDSDE (183 aa)) form an interaction with ROCK2 region. Residues 683–693 (KARSRQARQSR) are compositionally biased toward basic residues. A phosphoserine; by PKA and PKG; in vitro mark is found at Ser692 and Ser695. The residue at position 696 (Thr696) is a Phosphothreonine; by ROCK1, ROCK2, CDC42BP, ZIPK/DAPK3 and RAF1. The segment covering 718–767 (RTREQENEEKEKEEKEKQDKEKQEEKKESETSREDEYKQKYSRTYDETYQ) has biased composition (basic and acidic residues). Residues 773–795 (STSSSTTPSSSLSTMSSSLYASS) show a composition bias toward low complexity. The segment covering 796–810 (QLNRPNSLVGITSAY) has biased composition (polar residues). The residue at position 802 (Ser802) is a Phosphoserine. A compositionally biased stretch (basic and acidic residues) spans 814–840 (ITKENEREGEKREEEKEGEDKSQPKSI). The span at 841–852 (RERRRPREKRRS) shows a compositional bias: basic residues. A Phosphoserine; by ROCK2 modification is found at Ser852. Acidic residues predominate over residues 861–875 (DSDENEQEQQSDTEE). Residues Ser862 and Ser871 each carry the phosphoserine modification. A compositionally biased stretch (polar residues) spans 884 to 897 (TDSISRYETSSTSA). Phosphoserine occurs at positions 903 and 908. A compositionally biased stretch (low complexity) spans 903–913 (SLLGRSGSYSY). Ser910 carries the phosphoserine; by NUAK1 modification. Positions 914 to 928 (LEERKPYSSRLEKDD) are enriched in basic and acidic residues. Ser995 is subject to Phosphoserine.

In terms of assembly, PP1 comprises a catalytic subunit, PPP1CA, PPP1CB or PPP1CC, and one or several targeting or regulatory subunits. PPP1R12A mediates binding to myosin. Interacts with ARHA and CIT. Binds PPP1R12B, ROCK1 and IL16. Interacts directly with PRKG1. Non-covalent dimer of 2 dimers; PRKG1-PRKG1 and PPP1R12A-PPP1R12A. Interacts with SMTNL1. Interacts with PPP1CB; the interaction is direct. Interacts (when phosphorylated at Ser-445, Ser-472 and Ser-910) with 14-3-3. Interacts with ROCK1 and ROCK2. Interacts with isoform 1 and isoform 2 of ZIPK/DAPK3. Interacts with RAF1. Interacts with HIF1AN. Interacts with NCKAP1L. Phosphorylated by CIT (Rho-associated kinase). Phosphorylated cooperatively by ROCK1 and CDC42BP on Thr-696. Phosphorylated on upon DNA damage, probably by ATM or ATR. In vitro, phosphorylation of Ser-695 by PKA and PKG appears to prevent phosphorylation of the inhibitory site Thr-696, probably mediated by PRKG1. Phosphorylation at Ser-445, Ser-472 and Ser-910 by NUAK1 promotes interaction with 14-3-3, leading to inhibit interaction with myosin light chain MLC2, preventing dephosphorylation of MLC2. May be phosphorylated at Thr-696 by DMPK; may inhibit the myosin phosphatase activity. Phosphorylated at Ser-473 by CDK1 during mitosis, creating docking sites for the POLO box domains of PLK1. Subsequently, PLK1 binds and phosphorylates PPP1R12A. As to expression, expressed in striated muscles, specifically in type 2a fibers (at protein level).

It is found in the cytoplasm. The protein resides in the cytoskeleton. It localises to the stress fiber. Key regulator of protein phosphatase 1C (PPP1C). Mediates binding to myosin. As part of the PPP1C complex, involved in dephosphorylation of PLK1. Capable of inhibiting HIF1AN-dependent suppression of HIF1A activity. The sequence is that of Protein phosphatase 1 regulatory subunit 12A from Homo sapiens (Human).